The following is a 1118-amino-acid chain: Error-prone DNA polymerase (1118 aa).

Residues 1071 to 1118 form a disordered region; that stretch reads GPQPMGYAKEVGSDRRSRPEIGNAPARQDLATLSEEAEQVMPKGRNFQ.

The protein belongs to the DNA polymerase type-C family. DnaE2 subfamily.

It is found in the cytoplasm. It carries out the reaction DNA(n) + a 2'-deoxyribonucleoside 5'-triphosphate = DNA(n+1) + diphosphate. In terms of biological role, DNA polymerase involved in damage-induced mutagenesis and translesion synthesis (TLS). It is not the major replicative DNA polymerase. The sequence is that of Error-prone DNA polymerase from Mesorhizobium japonicum (strain LMG 29417 / CECT 9101 / MAFF 303099) (Mesorhizobium loti (strain MAFF 303099)).